Here is a 397-residue protein sequence, read N- to C-terminus: Ubiquitin-like modifier-activating enzyme 5 (397 aa).

Residues Gly-77, Asp-98, Lys-121, Asn-144, and Asn-178 each contribute to the ATP site. 2 residues coordinate Zn(2+): Cys-220 and Cys-223. Cys-244 functions as the Glycyl thioester intermediate in the catalytic mechanism. Cys-297 and Cys-302 together coordinate Zn(2+).

It belongs to the ubiquitin-activating E1 family. UBA5 subfamily.

Functionally, E1-like enzyme which activates UFM1. The sequence is that of Ubiquitin-like modifier-activating enzyme 5 from Culex quinquefasciatus (Southern house mosquito).